An 800-amino-acid polypeptide reads, in one-letter code: Ribosome-releasing factor 2, mitochondrial (800 aa).

The tr-type G domain maps to 21–307 (SKVRNIGIIA…AIANYLPSPS (287 aa)). GTP contacts are provided by residues 30–37 (AHIDAGKT), 95–99 (DTPGH), and 147–150 (NKMD).

It belongs to the TRAFAC class translation factor GTPase superfamily. Classic translation factor GTPase family. EF-G/EF-2 subfamily.

It is found in the mitochondrion. In terms of biological role, mitochondrial GTPase that mediates the disassembly of ribosomes from messenger RNA at the termination of mitochondrial protein biosynthesis. Not involved in the GTP-dependent ribosomal translocation step during translation elongation. The protein is Ribosome-releasing factor 2, mitochondrial of Kluyveromyces lactis (strain ATCC 8585 / CBS 2359 / DSM 70799 / NBRC 1267 / NRRL Y-1140 / WM37) (Yeast).